Here is a 75-residue protein sequence, read N- to C-terminus: Lividin-3 (75 aa).

The N-terminal stretch at 1-22 (MFTLKKSLLLLFFLGTISLSLC) is a signal peptide. A propeptide spanning residues 23-40 (EEERDADEDEGEMTEEEV) is cleaved from the precursor. Cys69 and Cys75 are joined by a disulfide.

Expressed by the skin glands.

It localises to the secreted. Functionally, antimicrobial peptide. In Odorrana livida (Green mountain frog), this protein is Lividin-3.